A 1078-amino-acid polypeptide reads, in one-letter code: Cell wall acid trehalase ATC1 (1078 aa).

The first 54 residues, 1 to 54 (MAANSSFFLADNCAPHNQSFIQFCIHAASKKKGRIALMCLANLFLLFSFHLLYA), serve as a signal peptide directing secretion. N-linked (GlcNAc...) asparagine glycans are attached at residues asparagine 4, asparagine 17, asparagine 150, asparagine 184, asparagine 242, asparagine 287, asparagine 301, and asparagine 350. 478-479 (WD) contributes to the substrate binding site. 3 N-linked (GlcNAc...) asparagine glycosylation sites follow: asparagine 532, asparagine 591, and asparagine 601. Glutamate 607 acts as the Proton donor in catalysis. Asparagine 661 and asparagine 670 each carry an N-linked (GlcNAc...) asparagine glycan. A substrate-binding site is contributed by 676–677 (KQ). N-linked (GlcNAc...) asparagine glycans are attached at residues asparagine 829, asparagine 837, asparagine 904, asparagine 922, asparagine 931, asparagine 946, asparagine 1003, and asparagine 1037.

Belongs to the glycosyl hydrolase 65 family.

It localises to the secreted. The protein localises to the cell wall. The enzyme catalyses alpha,alpha-trehalose + H2O = alpha-D-glucose + beta-D-glucose. Cell wall acid trehalase that catalyzes hydrolysis of the disaccharide trehalose and required for growth on trehalose as carbon source. Plays a role in dimorphic conversion and virulence. The polypeptide is Cell wall acid trehalase ATC1 (ATC1) (Candida albicans (strain SC5314 / ATCC MYA-2876) (Yeast)).